A 353-amino-acid chain; its full sequence is Terpene synthase 1 (353 aa).

Residues 81–86 (DDAIDA) carry the DDxx(x)D/E motif motif. Positions 222–230 (NDLVSYEKE) match the NDxxSxxxD/E motif motif.

It belongs to the terpene synthase family.

It catalyses the reaction (2E,6E)-farnesyl diphosphate = (2S,3R,6S,9S)-(-)-protoillud-7-ene + diphosphate. Its function is as follows. Terpene synthase that converts its substrate farnesyl diphosphate (FPP) into the sesquiterpene protoillud-7-ene. This chain is Terpene synthase 1, found in Tieghemostelium lacteum (Slime mold).